The primary structure comprises 290 residues: Ribosomal RNA small subunit methyltransferase A (290 aa).

S-adenosyl-L-methionine is bound by residues asparagine 27, leucine 29, glycine 54, glutamate 75, aspartate 100, and asparagine 125.

It belongs to the class I-like SAM-binding methyltransferase superfamily. rRNA adenine N(6)-methyltransferase family. RsmA subfamily.

The protein resides in the cytoplasm. It carries out the reaction adenosine(1518)/adenosine(1519) in 16S rRNA + 4 S-adenosyl-L-methionine = N(6)-dimethyladenosine(1518)/N(6)-dimethyladenosine(1519) in 16S rRNA + 4 S-adenosyl-L-homocysteine + 4 H(+). Its function is as follows. Specifically dimethylates two adjacent adenosines (A1518 and A1519) in the loop of a conserved hairpin near the 3'-end of 16S rRNA in the 30S particle. May play a critical role in biogenesis of 30S subunits. This chain is Ribosomal RNA small subunit methyltransferase A, found in Streptococcus agalactiae serotype V (strain ATCC BAA-611 / 2603 V/R).